We begin with the raw amino-acid sequence, 236 residues long: MRGNVYLLWGATTTGKTAFSVSVAKERGWSVIALDRFQGYHEISTGSGAPTNNELEKTERIYITPQRGLADGIITAKDYNYWLKSRVLSLPEGKSDFIIEGGSVSLLKEMVSDEFWADFLWEIKIFRAPSKDVFIKRAKRRITDMLHPEDGRPSIMDEVSSFFMNHKTIHPLEDIDGYRTIIDYCRCKKIGFDKLKIMTTDQEKIIISGIAEEYYAHALWQEQETPCFPHSWSRRW.

Belongs to the isopentenyl transferase family.

The enzyme catalyses dimethylallyl diphosphate + AMP = N(6)-(dimethylallyl)adenosine 5'-phosphate + diphosphate. Transfers dimethylallyl groups to AMP as part of the biosynthesis of cytokinin phytohormones. The polypeptide is Adenylate dimethylallyltransferase (ipt) (Pantoea agglomerans pv. gypsophilae (Erwinia herbicola)).